Consider the following 471-residue polypeptide: 3-isopropylmalate dehydratase large subunit (471 aa).

Residues Cys-351, Cys-414, and Cys-417 each contribute to the [4Fe-4S] cluster site.

It belongs to the aconitase/IPM isomerase family. LeuC type 1 subfamily. Heterodimer of LeuC and LeuD. Requires [4Fe-4S] cluster as cofactor.

It catalyses the reaction (2R,3S)-3-isopropylmalate = (2S)-2-isopropylmalate. It functions in the pathway amino-acid biosynthesis; L-leucine biosynthesis; L-leucine from 3-methyl-2-oxobutanoate: step 2/4. Its function is as follows. Catalyzes the isomerization between 2-isopropylmalate and 3-isopropylmalate, via the formation of 2-isopropylmaleate. This is 3-isopropylmalate dehydratase large subunit from Colwellia psychrerythraea (strain 34H / ATCC BAA-681) (Vibrio psychroerythus).